A 62-amino-acid polypeptide reads, in one-letter code: Ribulose bisphosphate carboxylase/oxygenase activase, chloroplastic (62 aa).

It belongs to the RuBisCO activase family.

The protein resides in the plastid. It localises to the chloroplast stroma. In terms of biological role, activation of RuBisCO (ribulose-1,5-bisphosphate carboxylase/oxygenase; EC 4.1.1.39) involves the ATP-dependent carboxylation of the epsilon-amino group of lysine leading to a carbamate structure. The protein is Ribulose bisphosphate carboxylase/oxygenase activase, chloroplastic of Vitis sp. (Grape).